Reading from the N-terminus, the 90-residue chain is Cyclin-dependent kinases regulatory subunit 1 (90 aa).

The protein belongs to the CKS family.

Its function is as follows. Binds to the catalytic subunit of the cyclin dependent kinases and is essential for their biological function. The polypeptide is Cyclin-dependent kinases regulatory subunit 1 (CKS1) (Oryza sativa subsp. indica (Rice)).